We begin with the raw amino-acid sequence, 269 residues long: Chymotrypsin-like elastase family member 3B (269 aa).

The signal sequence occupies residues 1–16; it reads MLRLLSSLLLVALASG. The propeptide at 17–27 is activation peptide; it reads CGQPSHNPSSR. The region spanning 28 to 267 is the Peptidase S1 domain; it reads VVNGEEAVPH…FIDWIEETIA (240 aa). A disulfide bridge connects residues cysteine 57 and cysteine 73. Residues histidine 72 and aspartate 122 each act as charge relay system in the active site. 3 disulfides stabilise this stretch: cysteine 156–cysteine 222, cysteine 187–cysteine 203, and cysteine 212–cysteine 243. Serine 216 serves as the catalytic Charge relay system.

This sequence belongs to the peptidase S1 family. Elastase subfamily.

The catalysed reaction is Preferential cleavage: Ala-|-Xaa. Does not hydrolyze elastin.. Functionally, efficient protease with alanine specificity but only little elastolytic activity. The chain is Chymotrypsin-like elastase family member 3B (Cela3b) from Mus musculus (Mouse).